Reading from the N-terminus, the 149-residue chain is D-aminoacyl-tRNA deacylase (149 aa).

The Gly-cisPro motif, important for rejection of L-amino acids motif lies at 138–139 (GP).

It belongs to the DTD family. In terms of assembly, homodimer.

Its subcellular location is the cytoplasm. It catalyses the reaction glycyl-tRNA(Ala) + H2O = tRNA(Ala) + glycine + H(+). The enzyme catalyses a D-aminoacyl-tRNA + H2O = a tRNA + a D-alpha-amino acid + H(+). In terms of biological role, an aminoacyl-tRNA editing enzyme that deacylates mischarged D-aminoacyl-tRNAs. Also deacylates mischarged glycyl-tRNA(Ala), protecting cells against glycine mischarging by AlaRS. Acts via tRNA-based rather than protein-based catalysis; rejects L-amino acids rather than detecting D-amino acids in the active site. By recycling D-aminoacyl-tRNA to D-amino acids and free tRNA molecules, this enzyme counteracts the toxicity associated with the formation of D-aminoacyl-tRNA entities in vivo and helps enforce protein L-homochirality. The protein is D-aminoacyl-tRNA deacylase of Chlorobaculum parvum (strain DSM 263 / NCIMB 8327) (Chlorobium vibrioforme subsp. thiosulfatophilum).